A 624-amino-acid chain; its full sequence is Chaperone protein HtpG (624 aa).

An a; substrate-binding region spans residues 1–338 (MNNKNKITHT…SQDLPLNISR (338 aa)). The segment at 339–552 (EILQDSSITH…TNDMSTQMAK (214 aa)) is b. The segment at 553 to 624 (IFSAAGQPIP…IQRINNFFIS (72 aa)) is c.

It belongs to the heat shock protein 90 family. Homodimer.

The protein resides in the cytoplasm. Functionally, molecular chaperone. Has ATPase activity. This Buchnera aphidicola subsp. Cinara cedri (strain Cc) protein is Chaperone protein HtpG.